Consider the following 261-residue polypeptide: Troponin T, slow skeletal muscle (261 aa).

The span at 1–30 shows a compositional bias: acidic residues; the sequence is MSDTEEQEYEEEQAEDEEAVEEEAPEEPEP. Disordered regions lie at residues 1–61 and 108–152; these read MSDT…ERVD and ERAE…KKKV. A Phosphoserine; by CK2 modification is found at Ser2. The span at 31–40 shows a compositional bias: basic and acidic residues; it reads VAEREEERPK. Residues 42–54 show a composition bias toward pro residues; it reads SRPVVPPLIPPKI. Basic and acidic residues predominate over residues 108–148; the sequence is ERAEQQRFRTEKERERQAKLAEEKMRKEEEEAKKRAEDDAK.

This sequence belongs to the troponin T family. Interacts with TPM3. As to expression, expressed in soleus muscle. Isoform 4 is predominantly expressed in fast muscles.

Troponin T is the tropomyosin-binding subunit of troponin, the thin filament regulatory complex which confers calcium-sensitivity to striated muscle actomyosin ATPase activity. The sequence is that of Troponin T, slow skeletal muscle (Tnnt1) from Rattus norvegicus (Rat).